We begin with the raw amino-acid sequence, 145 residues long: Large ribosomal subunit protein bL19 (145 aa).

Positions 112-130 (GKSARIKERRPAKAVEKTS) are enriched in basic and acidic residues. The tract at residues 112-145 (GKSARIKERRPAKAVEKTSKPASAKKPAAKANKK) is disordered.

The protein belongs to the bacterial ribosomal protein bL19 family.

In terms of biological role, this protein is located at the 30S-50S ribosomal subunit interface and may play a role in the structure and function of the aminoacyl-tRNA binding site. The protein is Large ribosomal subunit protein bL19 of Malacoplasma penetrans (strain HF-2) (Mycoplasma penetrans).